Reading from the N-terminus, the 284-residue chain is Pseudouridine-5'-phosphate glycosidase (284 aa).

Residue glutamate 17 is the Proton donor of the active site. 2 residues coordinate substrate: lysine 77 and valine 97. Aspartate 126 contributes to the Mn(2+) binding site. Position 128–130 (128–130 (SQD)) interacts with substrate. Lysine 147 serves as the catalytic Nucleophile.

This sequence belongs to the pseudouridine-5'-phosphate glycosidase family. As to quaternary structure, homotrimer. Mn(2+) is required as a cofactor.

The catalysed reaction is D-ribose 5-phosphate + uracil = psi-UMP + H2O. In terms of biological role, catalyzes the reversible cleavage of pseudouridine 5'-phosphate (PsiMP) to ribose 5-phosphate and uracil. Functions biologically in the cleavage direction, as part of a pseudouridine degradation pathway. This is Pseudouridine-5'-phosphate glycosidase from Thermotoga petrophila (strain ATCC BAA-488 / DSM 13995 / JCM 10881 / RKU-1).